Reading from the N-terminus, the 129-residue chain is Small ribosomal subunit protein uS11 (129 aa).

It belongs to the universal ribosomal protein uS11 family. Part of the 30S ribosomal subunit. Interacts with proteins S7 and S18. Binds to IF-3.

Its function is as follows. Located on the platform of the 30S subunit, it bridges several disparate RNA helices of the 16S rRNA. Forms part of the Shine-Dalgarno cleft in the 70S ribosome. This is Small ribosomal subunit protein uS11 from Bacillus anthracis (strain A0248).